A 412-amino-acid polypeptide reads, in one-letter code: Methylmalonic aciduria type A homolog, mitochondrial (412 aa).

The N-terminal 15 residues, 1-15 (MVVRALVRAHPLSRI), are a transit peptide targeting the mitochondrion. Residues 132-140 (GSPGVGKSS), D275, and 311-313 (SIM) contribute to the GTP site.

This sequence belongs to the SIMIBI class G3E GTPase family. ArgK/MeaB subfamily.

Its subcellular location is the mitochondrion. In terms of biological role, may have GTPase activity. May also bind and hydrolyze ATP. May function as chaperone. Likely to have a role in propionyl-CoA metabolism and adenosylcobalamin synthesis. This Caenorhabditis briggsae protein is Methylmalonic aciduria type A homolog, mitochondrial.